The chain runs to 112 residues: Large ribosomal subunit protein bL17 (112 aa).

This sequence belongs to the bacterial ribosomal protein bL17 family. Part of the 50S ribosomal subunit. Contacts protein L32.

In Carboxydothermus hydrogenoformans (strain ATCC BAA-161 / DSM 6008 / Z-2901), this protein is Large ribosomal subunit protein bL17.